The primary structure comprises 113 residues: U11-theraphotoxin-Hhn1a (113 aa).

The first 21 residues, 1–21 (MNTVRVAFLLVFVLAVSLGQA), serve as a signal peptide directing secretion. A propeptide spanning residues 22–74 (DKDENRMEMQEKTEQGKSYLDFAENLLLQKLEEPEAKLLEEDSEESRNSRQKR) is cleaved from the precursor. Positions 58 to 69 (KLLEEDSEESRN) are enriched in basic and acidic residues. The disordered stretch occupies residues 58–83 (KLLEEDSEESRNSRQKRCIGEGVPCD). Intrachain disulfides connect Cys-75–Cys-90, Cys-82–Cys-95, and Cys-89–Cys-110.

This sequence belongs to the neurotoxin 14 (magi-1) family. 01 (HNTX-16) subfamily. Expressed by the venom gland.

Its subcellular location is the secreted. In terms of biological role, probable ion channel inhibitor. The sequence is that of U11-theraphotoxin-Hhn1a from Cyriopagopus hainanus (Chinese bird spider).